The sequence spans 729 residues: Rab-like protein 6 (729 aa).

N-acetylmethionine is present on Met-1. Positions 39–279 (GVQYNMKIVI…IFLEMMEARS (241 aa)) are small GTPase-like. Residues 50-57 (GDRNTGKT), 100-104 (DVVDK), and 177-179 (YRD) each bind GTP. Residues 281–729 (GHASPLAANG…HPGGGDYEEL (449 aa)) form a disordered region. The segment covering 290-315 (GQSPSPGSQSPVVPAGAVSTGSSSPG) has biased composition (low complexity). Pro residues predominate over residues 331-351 (SSVPPVPPSEALPPPACPSAP). Residues 395–416 (PDDRLDRSFLEDTTPARDEKKV) are compositionally biased toward basic and acidic residues. Phosphoserine is present on residues Ser-402, Ser-425, Ser-427, Ser-470, Ser-471, Ser-492, Ser-525, and Ser-577. The span at 489 to 502 (QQCSEPETKWSSIP) shows a compositional bias: polar residues. The segment covering 581–595 (DTQRRADDFPVRDDP) has biased composition (basic and acidic residues). Ser-596 carries the phosphoserine modification. Acidic residues predominate over residues 596–605 (SDVTDEDEGP). Thr-599 bears the Phosphothreonine mark. Over residues 606-615 (AEPPPPPKLP) the composition is skewed to pro residues. The segment covering 635–652 (AGPKESSEEGKEGKTPSK) has biased composition (basic and acidic residues). Residues Ser-640 and Ser-641 each carry the phosphoserine modification. Positions 655-693 (KKKKKKGKEEEEKAAKKKSKHKKSKDKEEGKEERRRRQQ) are interaction with CDKN2A. The segment covering 669 to 678 (AKKKSKHKKS) has biased composition (basic residues). The span at 679–689 (KDKEEGKEERR) shows a compositional bias: basic and acidic residues. The segment covering 711–729 (LGGGAPGGRHPGGGDYEEL) has biased composition (gly residues).

It belongs to the small GTPase superfamily. Rab family. Post-translationally, isoform 1 is O-glycosylated, while other isoforms are not.

It is found in the cytoplasm. The protein localises to the nucleus. May enhance cellular proliferation. May reduce growth inhibitory activity of CDKN2A. The polypeptide is Rab-like protein 6 (RABL6) (Homo sapiens (Human)).